A 174-amino-acid polypeptide reads, in one-letter code: Large ribosomal subunit protein uL10 (174 aa).

It belongs to the universal ribosomal protein uL10 family. In terms of assembly, part of the ribosomal stalk of the 50S ribosomal subunit. The N-terminus interacts with L11 and the large rRNA to form the base of the stalk. The C-terminus forms an elongated spine to which L12 dimers bind in a sequential fashion forming a multimeric L10(L12)X complex.

Forms part of the ribosomal stalk, playing a central role in the interaction of the ribosome with GTP-bound translation factors. This chain is Large ribosomal subunit protein uL10, found in Trichlorobacter lovleyi (strain ATCC BAA-1151 / DSM 17278 / SZ) (Geobacter lovleyi).